The sequence spans 469 residues: Glutamate--tRNA ligase 2 (469 aa).

The short motif at 8-18 is the 'HIGH' region element; that stretch reads PSPTGFLHVGG. Residues 250-254 carry the 'KMSKS' region motif; that stretch reads KLSKR. Lysine 253 provides a ligand contact to ATP.

The protein belongs to the class-I aminoacyl-tRNA synthetase family. Glutamate--tRNA ligase type 1 subfamily. In terms of assembly, monomer.

The protein localises to the cytoplasm. It carries out the reaction tRNA(Glu) + L-glutamate + ATP = L-glutamyl-tRNA(Glu) + AMP + diphosphate. In terms of biological role, catalyzes the attachment of glutamate to tRNA(Glu) in a two-step reaction: glutamate is first activated by ATP to form Glu-AMP and then transferred to the acceptor end of tRNA(Glu). This chain is Glutamate--tRNA ligase 2, found in Thermotoga sp. (strain RQ2).